The chain runs to 159 residues: Endoribonuclease YbeY (159 aa).

His-114, His-118, and His-124 together coordinate Zn(2+).

The protein belongs to the endoribonuclease YbeY family. The cofactor is Zn(2+).

It localises to the cytoplasm. Its function is as follows. Single strand-specific metallo-endoribonuclease involved in late-stage 70S ribosome quality control and in maturation of the 3' terminus of the 16S rRNA. This chain is Endoribonuclease YbeY, found in Pectobacterium carotovorum subsp. carotovorum (strain PC1).